Consider the following 235-residue polypeptide: MPKLGKKYRNAVKGVDLSLHLSFEDAVTQSIQTSFANFDETVDIAIGLGVDPKYSDQMVRGAVTLPYGLGKTVRVAVFCKGEKEAEAKEAGADYAGAEELVAKIKDGWLDFDAAVATPDVMALVGQVGRQLGPRGLMPNAKTGTVTFNVTNAIKELKAGRIDFKVDKAGVLHAPLGKVSFGSEKILGNLKSLVETVNRLKPSSAKGTYIKSMAISTTMGPGFKIDTNLVKKFLES.

This sequence belongs to the universal ribosomal protein uL1 family. In terms of assembly, part of the 50S ribosomal subunit.

Functionally, binds directly to 23S rRNA. The L1 stalk is quite mobile in the ribosome, and is involved in E site tRNA release. Its function is as follows. Protein L1 is also a translational repressor protein, it controls the translation of the L11 operon by binding to its mRNA. The polypeptide is Large ribosomal subunit protein uL1 (Lawsonia intracellularis (strain PHE/MN1-00)).